Reading from the N-terminus, the 369-residue chain is Deoxyhypusine synthase (369 aa).

NAD(+)-binding positions include serine 105 to serine 109, threonine 131 to glycine 133, glutamate 137, and aspartate 238. Glutamate 136–glutamate 137 provides a ligand contact to spermidine. Aspartate 243 is a binding site for spermidine. Glycine 283 lines the NAD(+) pocket. Histidine 288 is a spermidine binding site. Threonine 308 to alanine 309 contacts NAD(+). Residues glycine 314–aspartate 316 and glutamate 323–lysine 329 contribute to the spermidine site. The active-site Nucleophile is lysine 329. Residue aspartate 342 to alanine 343 coordinates NAD(+).

It belongs to the deoxyhypusine synthase family. Requires NAD(+) as cofactor.

It catalyses the reaction [eIF5A protein]-L-lysine + spermidine = [eIF5A protein]-deoxyhypusine + propane-1,3-diamine. It functions in the pathway protein modification; eIF5A hypusination. Its function is as follows. Catalyzes the NAD-dependent oxidative cleavage of spermidine and the subsequent transfer of the butylamine moiety of spermidine to the epsilon-amino group of a critical lysine residue of the eIF-5A precursor protein to form the intermediate deoxyhypusine residue. This is the first step of the post-translational modification of that lysine into an unusual amino acid residue named hypusine. Hypusination is unique to mature eIF-5A factor and is essential for its function. This is Deoxyhypusine synthase (Dhps) from Rattus norvegicus (Rat).